The primary structure comprises 583 residues: Immunity-related GTPase family Q protein (583 aa).

An intrachain disulfide couples Cys152 to Cys158. The stretch at 155–179 (SDRCEELERLQVVLRTQAEALQRLL) forms a coiled coil. Residues 186 to 189 (FEVL) carry the LIR 1 motif. The residue at position 203 (Thr203) is a Phosphothreonine. In terms of domain architecture, IRG-type G spans 223–409 (ARLDLAVAGT…PGLGTWLQHA (187 aa)). The tract at residues 322–373 (APLVGVRTDGQGEDPPEVLEEEKAQNASDGNSGDARSEGKKAGIGDSGCTAA) is disordered. The span at 332–341 (QGEDPPEVLE) shows a compositional bias: acidic residues. An LIR 2 motif is present at residues 381 to 384 (WEVL).

This sequence belongs to the TRAFAC class dynamin-like GTPase superfamily. IRG family. In terms of assembly, interacts (via LIR motif 1) with GABARAPL2. Interacts (via LIR motif 2) with MAP1LC3B/LC3B.

The protein localises to the lysosome. Its subcellular location is the cytoplasmic vesicle. The protein resides in the autophagosome. Functionally, autophagy receptor that specifically promotes clearance of misfolded MHC class I molecules by targeting them to the lysosome for degradation. Acts as a molecular adapter that specifically recognizes and binds (1) misfolded MHC class I molecules following their ubiquitination, as well as (2) autophagy-related proteins, promoting the recruitment of misfolded MHC class I molecules to autophagy machinery for degradation. Degradation of misfolded MHC class I molecules is essential to prevent accumulation of defective MHC class I complexes at the surface of CD8(+) T-cells and prevent a stronger T-cell-mediated response. In contrast to other members of the family, does not show GTPase activity. This chain is Immunity-related GTPase family Q protein (Irgq), found in Mus musculus (Mouse).